Reading from the N-terminus, the 722-residue chain is Probable C-mannosyltransferase DPY19L4 (722 aa).

The segment at Met1–Pro34 is disordered. Ala2 carries the post-translational modification N-acetylalanine. Positions Ala25–Pro34 are enriched in basic and acidic residues. 12 consecutive transmembrane segments (helical) span residues Ile51–Ala71, Val160–Ala177, Trp183–Ile201, Phe246–Trp262, Val268–Val284, Tyr291–Leu307, Ala313–Cys331, Phe351–Val369, Leu420–Phe440, Ile465–Leu485, Phe487–Trp507, and Pro521–Trp541.

Belongs to the dpy-19 family.

The protein resides in the membrane. In terms of biological role, probable C-mannosyltransferase that mediates C-mannosylation of tryptophan residues on target proteins. This Mus musculus (Mouse) protein is Probable C-mannosyltransferase DPY19L4 (Dpy19l4).